Reading from the N-terminus, the 1385-residue chain is DNA-directed RNA polymerase subunit beta (1385 aa).

Belongs to the RNA polymerase beta chain family. The RNAP catalytic core consists of 2 alpha, 1 beta, 1 beta' and 1 omega subunit. When a sigma factor is associated with the core the holoenzyme is formed, which can initiate transcription.

It carries out the reaction RNA(n) + a ribonucleoside 5'-triphosphate = RNA(n+1) + diphosphate. In terms of biological role, DNA-dependent RNA polymerase catalyzes the transcription of DNA into RNA using the four ribonucleoside triphosphates as substrates. The protein is DNA-directed RNA polymerase subunit beta of Jannaschia sp. (strain CCS1).